The chain runs to 425 residues: Serine--tRNA ligase (425 aa).

Residue 230-232 participates in L-serine binding; it reads TAE. Position 261–263 (261–263) interacts with ATP; it reads RSE. An L-serine-binding site is contributed by E284. 348 to 351 lines the ATP pocket; sequence EISS. An L-serine-binding site is contributed by S384.

This sequence belongs to the class-II aminoacyl-tRNA synthetase family. Type-1 seryl-tRNA synthetase subfamily. In terms of assembly, homodimer. The tRNA molecule binds across the dimer.

It is found in the cytoplasm. The enzyme catalyses tRNA(Ser) + L-serine + ATP = L-seryl-tRNA(Ser) + AMP + diphosphate + H(+). It carries out the reaction tRNA(Sec) + L-serine + ATP = L-seryl-tRNA(Sec) + AMP + diphosphate + H(+). It participates in aminoacyl-tRNA biosynthesis; selenocysteinyl-tRNA(Sec) biosynthesis; L-seryl-tRNA(Sec) from L-serine and tRNA(Sec): step 1/1. Catalyzes the attachment of serine to tRNA(Ser). Is also able to aminoacylate tRNA(Sec) with serine, to form the misacylated tRNA L-seryl-tRNA(Sec), which will be further converted into selenocysteinyl-tRNA(Sec). In Streptococcus pyogenes serotype M6 (strain ATCC BAA-946 / MGAS10394), this protein is Serine--tRNA ligase.